The primary structure comprises 131 residues: Profilin-8 (131 aa).

The cysteines at positions 13 and 115 are disulfide-linked. The Involved in PIP2 interaction signature appears at 81–97 (AVIRGKKGAGGITIKKT). T111 is subject to Phosphothreonine.

The protein belongs to the profilin family. In terms of assembly, occurs in many kinds of cells as a complex with monomeric actin in a 1:1 ratio. Post-translationally, phosphorylated by MAP kinases.

The protein resides in the cytoplasm. The protein localises to the cytoskeleton. Its function is as follows. Binds to actin and affects the structure of the cytoskeleton. At high concentrations, profilin prevents the polymerization of actin, whereas it enhances it at low concentrations. The sequence is that of Profilin-8 from Olea europaea (Common olive).